Reading from the N-terminus, the 625-residue chain is ATP-dependent RNA helicase DBP9 (625 aa).

Residues 1 to 21 (MKRKLDANNVPSPEDSAGKSI) form a disordered region. The Q motif signature appears at 24–52 (HSFETLKLDPRLLQALTQQKFTKPTPIQA). Residues 55-233 (IPLALDGKDV…GLFCRNPVVL (179 aa)) enclose the Helicase ATP-binding domain. Residue 68-75 (AKTGSGKT) coordinates ATP. Positions 181-184 (DEAD) match the DEAD box motif. The region spanning 260–485 (LLTYVIFKLQ…EVKPYHFDMK (226 aa)) is the Helicase C-terminal domain. Disordered stretches follow at residues 339 to 393 (RKNS…EKDY) and 590 to 625 (IRKA…GGKH). Residues 347-357 (RKSDQCSRDSE) are compositionally biased toward basic and acidic residues. The segment covering 361–370 (AQTSRNNDQY) has biased composition (polar residues). Positions 599 to 610 (GRGRGGKAGRGG) are enriched in basic residues.

The protein belongs to the DEAD box helicase family. DDX56/DBP9 subfamily.

The protein resides in the nucleus. Its subcellular location is the nucleolus. The enzyme catalyses ATP + H2O = ADP + phosphate + H(+). In terms of biological role, ATP-binding RNA helicase involved in the biogenesis of 60S ribosomal subunits and is required for the normal formation of 25S and 5.8S rRNAs. This Ajellomyces capsulatus (strain NAm1 / WU24) (Darling's disease fungus) protein is ATP-dependent RNA helicase DBP9 (DBP9).